A 315-amino-acid polypeptide reads, in one-letter code: Ribose-phosphate pyrophosphokinase (315 aa).

Residues 37 to 39 (DGE) and 96 to 97 (RQ) contribute to the ATP site. Positions 131 and 170 each coordinate Mg(2+). The active site involves lysine 194. Residues arginine 196, aspartate 220, and 224–228 (DTGGT) each bind D-ribose 5-phosphate.

It belongs to the ribose-phosphate pyrophosphokinase family. Class I subfamily. As to quaternary structure, homohexamer. The cofactor is Mg(2+).

It is found in the cytoplasm. The enzyme catalyses D-ribose 5-phosphate + ATP = 5-phospho-alpha-D-ribose 1-diphosphate + AMP + H(+). The protein operates within metabolic intermediate biosynthesis; 5-phospho-alpha-D-ribose 1-diphosphate biosynthesis; 5-phospho-alpha-D-ribose 1-diphosphate from D-ribose 5-phosphate (route I): step 1/1. Its function is as follows. Involved in the biosynthesis of the central metabolite phospho-alpha-D-ribosyl-1-pyrophosphate (PRPP) via the transfer of pyrophosphoryl group from ATP to 1-hydroxyl of ribose-5-phosphate (Rib-5-P). This chain is Ribose-phosphate pyrophosphokinase, found in Yersinia pestis.